The sequence spans 55 residues: MAKATTIKIKLLSTADTGFFYVTTKNSRTMTDKMTKTKYDPIAKKHVEFKETKIK.

Belongs to the bacterial ribosomal protein bL33 family.

The protein is Large ribosomal subunit protein bL33 of Rhizobium etli (strain CIAT 652).